The primary structure comprises 674 residues: Xaa-Pro aminopeptidase 2 (674 aa).

Positions 1 to 22 (MAQAYWQCYPWLVLLCACAWSY) are cleaved as a signal peptide. N-linked (GlcNAc...) asparagine glycosylation occurs at asparagine 65. Residue arginine 116 coordinates substrate. N-linked (GlcNAc...) asparagine glycosylation is found at asparagine 270, asparagine 278, and asparagine 293. Histidine 430 contributes to the substrate binding site. Zn(2+) is bound by residues aspartate 450, aspartate 461, and histidine 524. 3 residues coordinate substrate: histidine 524, histidine 533, and glutamate 555. Zn(2+) contacts are provided by glutamate 555 and glutamate 569. Alanine 650 carries GPI-anchor amidated alanine lipidation. Residues 651–674 (RAPHIISWTSLWVASALAILSWSS) constitute a propeptide, removed in mature form.

This sequence belongs to the peptidase M24B family. As to quaternary structure, homotrimer. Zn(2+) serves as cofactor. In terms of processing, N-glycosylated. Strongly expressed in small intestine, heart and lung. Also detected in testis, skeletal muscle, spleen, liver, kidney, brain, uterus, eye, lymph node, thymus, stomach, prostate and bone marrow.

Its subcellular location is the cell membrane. It catalyses the reaction Release of any N-terminal amino acid, including proline, that is linked to proline, even from a dipeptide or tripeptide.. In terms of biological role, membrane-bound metalloprotease which catalyzes the removal of a penultimate prolyl residue from the N-termini of peptides, such as Arg-Pro-Pro. May play a role in the metabolism of the vasodilator bradykinin. This chain is Xaa-Pro aminopeptidase 2, found in Mus musculus (Mouse).